A 504-amino-acid chain; its full sequence is Heat shock 70 kDa protein 14 (504 aa).

Belongs to the heat shock protein 70 family. As to quaternary structure, component of ribosome-associated complex (RAC).

It localises to the cytoplasm. The protein resides in the cytosol. Functionally, component of the ribosome-associated complex (RAC), a complex involved in folding or maintaining nascent polypeptides in a folding-competent state. The polypeptide is Heat shock 70 kDa protein 14 (hspa14) (Danio rerio (Zebrafish)).